A 144-amino-acid polypeptide reads, in one-letter code: Ribonuclease P protein subunit RPR2 (144 aa).

Residues 1–22 (MGKKAHGGKMKPEIDENGTLLV) are disordered. Cys90, Cys93, Cys115, and Cys117 together coordinate Zn(2+).

The protein belongs to the eukaryotic/archaeal RNase P protein component 4 family. Component of nuclear RNase P. RNase P consists of an RNA moiety and at least 9 protein subunits including POP1, POP3, POP4, POP5, POP6, POP7, POP8, RPP1 and RPR2, many of which are shared with the RNase MPR complex. The cofactor is Zn(2+).

The protein localises to the nucleus. It catalyses the reaction Endonucleolytic cleavage of RNA, removing 5'-extranucleotides from tRNA precursor.. Component of ribonuclease P, a protein complex that generates mature tRNA molecules by cleaving their 5'-ends. The protein is Ribonuclease P protein subunit RPR2 (RPR2) of Saccharomyces cerevisiae (strain ATCC 204508 / S288c) (Baker's yeast).